We begin with the raw amino-acid sequence, 65 residues long: Small ribosomal subunit protein bS21A (65 aa).

This sequence belongs to the bacterial ribosomal protein bS21 family.

This chain is Small ribosomal subunit protein bS21A, found in Francisella tularensis subsp. holarctica (strain LVS).